Here is an 87-residue protein sequence, read N- to C-terminus: DNA polymerase epsilon subunit C (87 aa).

As to quaternary structure, DNA polymerase epsilon is a heterotetramer consisting of cdc20/Pol2, dpb2, dpb3, and dpb4. Also forms a heterodimer consisting dpb3 and dpb4. Interacts directly with cdc20/pol2 and dpb4.

Its subcellular location is the nucleus. As accessory component of the DNA polymerase epsilon (DNA polymerase II) participates in chromosomal DNA replication. It is required during synthesis of the leading and lagging DNA strands at the replication fork and binds at/or near replication origins and moves along DNA with the replication fork. It has 3'-5' proofreading exonuclease activity that correct errors arising during DNA replication. It is also involved in DNA synthesis during DNA repair. The dpb3-dpb4 dimer associates with histone deacetylases, chromatin remodelers, and histones and plays a crucial role in the inheritance of histone hypoacetylation and H3K9 methylation in heterochromatin. The dpb3-dpb4 dimer is also required for the recruitment of sir2 to heterochromatin. This is DNA polymerase epsilon subunit C from Schizosaccharomyces pombe (strain 972 / ATCC 24843) (Fission yeast).